The chain runs to 637 residues: Limonene/alpha-pinene synthase, chloroplastic (637 aa).

The N-terminal 56 residues, 1–56 (MALLSIVSLQVPKSCGLKSLISSSNVQKALCISTAVPTLRMRRRQKALVINMKLTT), are a transit peptide targeting the chloroplast. Mg(2+)-binding residues include aspartate 388, aspartate 392, and aspartate 540. Residues 388–392 (DDMYD) carry the DDXXD motif motif.

It belongs to the terpene synthase family. Tpsd subfamily. Mg(2+) is required as a cofactor. Mn(2+) serves as cofactor. Requires K(+) as cofactor.

The protein resides in the plastid. Its subcellular location is the chloroplast. The catalysed reaction is (2E)-geranyl diphosphate = (4S)-limonene + diphosphate. It carries out the reaction (2E)-geranyl diphosphate = (1S,5S)-alpha-pinene + diphosphate. It participates in terpene metabolism; oleoresin biosynthesis. Its function is as follows. Involved in defensive oleoresin formation in conifers in response to insect attack or other injury. Involved in monoterpene (C10) olefins biosynthesis. This chain is Limonene/alpha-pinene synthase, chloroplastic (ag11), found in Abies grandis (Grand fir).